We begin with the raw amino-acid sequence, 336 residues long: Isopentenyl-diphosphate delta-isomerase (336 aa).

R5–K6 contacts substrate. FMN contacts are provided by residues A60–T62, S90, and N117. Q147 serves as a coordination point for substrate. E148 lines the Mg(2+) pocket. FMN-binding positions include K179, S204, T209, G253 to R255, and S274 to R275.

Belongs to the IPP isomerase type 2 family. In terms of assembly, homooctamer. Dimer of tetramers. The cofactor is FMN. NADPH is required as a cofactor. It depends on Mg(2+) as a cofactor.

The protein resides in the cytoplasm. The catalysed reaction is isopentenyl diphosphate = dimethylallyl diphosphate. Involved in the biosynthesis of isoprenoids. Catalyzes the 1,3-allylic rearrangement of the homoallylic substrate isopentenyl (IPP) to its allylic isomer, dimethylallyl diphosphate (DMAPP). In Streptococcus pneumoniae (strain ATCC BAA-255 / R6), this protein is Isopentenyl-diphosphate delta-isomerase.